The primary structure comprises 476 residues: Glycogen synthase (476 aa).

K15 provides a ligand contact to ADP-alpha-D-glucose.

Belongs to the glycosyltransferase 1 family. Bacterial/plant glycogen synthase subfamily.

The catalysed reaction is [(1-&gt;4)-alpha-D-glucosyl](n) + ADP-alpha-D-glucose = [(1-&gt;4)-alpha-D-glucosyl](n+1) + ADP + H(+). It functions in the pathway glycan biosynthesis; glycogen biosynthesis. Synthesizes alpha-1,4-glucan chains using ADP-glucose. This chain is Glycogen synthase, found in Streptococcus sanguinis (strain SK36).